A 132-amino-acid chain; its full sequence is Small ribosomal subunit protein uS8 (132 aa).

The protein belongs to the universal ribosomal protein uS8 family. In terms of assembly, part of the 30S ribosomal subunit. Contacts proteins S5 and S12.

In terms of biological role, one of the primary rRNA binding proteins, it binds directly to 16S rRNA central domain where it helps coordinate assembly of the platform of the 30S subunit. The protein is Small ribosomal subunit protein uS8 of Mycolicibacterium smegmatis (strain ATCC 700084 / mc(2)155) (Mycobacterium smegmatis).